A 1137-amino-acid polypeptide reads, in one-letter code: Phytochrome C (1137 aa).

The segment covering methionine 1–alanine 18 has biased composition (low complexity). A disordered region spans residues methionine 1–valine 27. A GAF domain is found at asparagine 217–valine 400. Residue cysteine 322 participates in phytochromobilin binding. PAS domains follow at residues valine 620–isoleucine 690 and isoleucine 750–serine 824. One can recognise a Histidine kinase domain in the interval tyrosine 904–glutamine 1124.

The protein belongs to the phytochrome family. In terms of assembly, homodimer. Contains one covalently linked phytochromobilin chromophore.

In terms of biological role, regulatory photoreceptor which exists in two forms that are reversibly interconvertible by light: the Pr form that absorbs maximally in the red region of the spectrum and the Pfr form that absorbs maximally in the far-red region. Photoconversion of Pr to Pfr induces an array of morphogenic responses, whereas reconversion of Pfr to Pr cancels the induction of those responses. Pfr controls the expression of a number of nuclear genes including those encoding the small subunit of ribulose-bisphosphate carboxylase, chlorophyll A/B binding protein, protochlorophyllide reductase, rRNA, etc. It also controls the expression of its own gene(s) in a negative feedback fashion. This Oryza sativa subsp. japonica (Rice) protein is Phytochrome C (PHYC).